A 158-amino-acid polypeptide reads, in one-letter code: C-type lectin BfL-2 (158 aa).

An N-terminal signal peptide occupies residues 1–21 (MGHFTFIGLCLLAMFLSLSGA). 4 disulfide bridges follow: Cys-26-Cys-37, Cys-54-Cys-154, Cys-61-Cys-156, and Cys-129-Cys-146. Residues 33 to 155 (KNGLCYKVFS…CETLHPFICQ (123 aa)) enclose the C-type lectin domain. Positions 119–121 (EPN) match the Mannose-binding motif. Residue Asn-121 is glycosylated (N-linked (GlcNAc...) asparagine). The Ca(2+) site is built by Glu-127, Asn-142, and Asp-143.

This sequence belongs to the true venom lectin family. As to quaternary structure, homodimer; non-covalently linked. In terms of tissue distribution, expressed by the venom gland.

It is found in the secreted. Its function is as follows. Mannose-binding lectin which recognizes specific carbohydrate structures and agglutinates a variety of animal cells by binding to cell-surface glycoproteins and glycolipids. May be a calcium-dependent lectin. The polypeptide is C-type lectin BfL-2 (Bungarus fasciatus (Banded krait)).